A 68-amino-acid polypeptide reads, in one-letter code: Small ribosomal subunit protein bS21 (68 aa).

The protein belongs to the bacterial ribosomal protein bS21 family.

This is Small ribosomal subunit protein bS21 from Dinoroseobacter shibae (strain DSM 16493 / NCIMB 14021 / DFL 12).